Here is a 521-residue protein sequence, read N- to C-terminus: Maturase K (521 aa).

This sequence belongs to the intron maturase 2 family. MatK subfamily.

The protein localises to the plastid. It is found in the chloroplast. Its function is as follows. Usually encoded in the trnK tRNA gene intron. Probably assists in splicing its own and other chloroplast group II introns. This Trillium erectum (Beth root) protein is Maturase K.